The sequence spans 335 residues: MTAPPVHDRAHHPVRDVIVIGSGPAGYTAALYAARAQLAPLVFEGTSFGGALMTTTDVENYPGFRNGITGPELMDEMREQALRFGADLRMEDVESVSLHGPLKSVVTADGQTHRARAVILAMGAAARYLQVPGEQELLGRGVSSCATCDGFFFRDQDIAVIGGGDSAMEEATFLTRFARSVTLVHRRDEFRASKIMLDRARNNDKIRFLTNHTVVAVDGDTTVTGLRVRDTNTGAETTLPVTGVFVAIGHEPRSGLVREAIDVDPDGYVLVQGRTTSTSLPGVFAAGDLVDRTYRQAVTAAGSGCAAAIDAERWLAEHAATGEADSTDALIGAQR.

Residues 22–25, 44–51, N60, and V93 contribute to the FAD site; these read SGPA and EGTSFGGA. A disulfide bond links C145 and C148. 5 residues coordinate NADP(+): S166, H185, R191, I248, and Y268. Residues D288 and 295–298 contribute to the FAD site; that span reads RQAV. R295 contacts NADP(+).

Belongs to the class-II pyridine nucleotide-disulfide oxidoreductase family. In terms of assembly, homodimer. Requires FAD as cofactor.

The protein localises to the cytoplasm. The enzyme catalyses [thioredoxin]-dithiol + NADP(+) = [thioredoxin]-disulfide + NADPH + H(+). In Mycobacterium tuberculosis (strain CDC 1551 / Oshkosh), this protein is Thioredoxin reductase.